The primary structure comprises 346 residues: 4-hydroxy-2-oxohexanoate aldolase (346 aa).

One can recognise a Pyruvate carboxyltransferase domain in the interval 7-259; that stretch reads VRITDTSLRD…KTGIDFFDIA (253 aa). Residue 15–16 participates in substrate binding; sequence RD. Asp16 is a binding site for Mn(2+). His19 functions as the Proton acceptor in the catalytic mechanism. The substrate site is built by Ser169 and His198. Mn(2+) contacts are provided by His198 and His200. Residue Tyr289 coordinates substrate.

It belongs to the 4-hydroxy-2-oxovalerate aldolase family. Homodimer. Forms a heterotetramer composed of two aldolase (HsaF) and two dehydrogenase (HsaG) subunits. Mn(2+) serves as cofactor.

It catalyses the reaction (S)-4-hydroxy-2-oxohexanoate = propanal + pyruvate. The catalysed reaction is (S)-4-hydroxy-2-oxopentanoate = acetaldehyde + pyruvate. Functionally, involved in cholesterol degradation. Catalyzes the retro-aldol cleavage of 4-hydroxy-2-oxohexanoate (HOHA) to pyruvate and propanal. Can also catalyze the cleavage of 4-hydroxy-2-oxopentanoate (HOPA) to pyruvate and acetaldehyde. The aldehydes produced by this reaction are directly channeled to the dehydrogenase HsaG. In Mycobacterium bovis (strain ATCC BAA-935 / AF2122/97), this protein is 4-hydroxy-2-oxohexanoate aldolase.